Consider the following 264-residue polypeptide: ATP synthase subunit a (264 aa).

The next 6 membrane-spanning stretches (helical) occupy residues 29 to 49 (TWHI…LWIF), 90 to 110 (IAPL…MDMI), 134 to 154 (DVNI…YYSI), 177 to 197 (IPVN…SLAL), 208 to 228 (LIFI…SLGV), and 235 to 255 (LIFH…LTIV).

The protein belongs to the ATPase A chain family. In terms of assembly, F-type ATPases have 2 components, CF(1) - the catalytic core - and CF(0) - the membrane proton channel. CF(1) has five subunits: alpha(3), beta(3), gamma(1), delta(1), epsilon(1). CF(0) has three main subunits: a(1), b(2) and c(9-12). The alpha and beta chains form an alternating ring which encloses part of the gamma chain. CF(1) is attached to CF(0) by a central stalk formed by the gamma and epsilon chains, while a peripheral stalk is formed by the delta and b chains.

The protein localises to the cell inner membrane. Its function is as follows. Key component of the proton channel; it plays a direct role in the translocation of protons across the membrane. This Shewanella oneidensis (strain ATCC 700550 / JCM 31522 / CIP 106686 / LMG 19005 / NCIMB 14063 / MR-1) protein is ATP synthase subunit a.